The chain runs to 375 residues: Alcohol dehydrogenase E chain (375 aa).

Ser2 is modified (N-acetylserine). Positions 47, 49, 68, 98, 101, 104, 112, and 175 each coordinate Zn(2+). Positions 49 and 68 each coordinate an alcohol. Ser49 is a binding site for NAD(+). NAD(+)-binding positions include 200-205 (GLGGVG), Asp224, Lys229, Val293, 293-295 (VGV), Phe320, and Arg370.

It belongs to the zinc-containing alcohol dehydrogenase family. Class-I subfamily. In terms of assembly, dimer of identical or non-identical chains of two types (E and S) coded by 2 separate genes at different loci. Zn(2+) serves as cofactor.

The protein resides in the cytoplasm. It catalyses the reaction a primary alcohol + NAD(+) = an aldehyde + NADH + H(+). The enzyme catalyses a secondary alcohol + NAD(+) = a ketone + NADH + H(+). The sequence is that of Alcohol dehydrogenase E chain from Equus caballus (Horse).